Consider the following 331-residue polypeptide: Decarboxylase orsB (331 aa).

His11, His157, and Asp284 together coordinate Zn(2+).

It belongs to the metallo-dependent hydrolases superfamily. ACMSD family.

Its pathway is secondary metabolite biosynthesis. Decarboxylase; part of the gene cluster that mediates the biosynthesis of orsellinic acid, as well as of the cathepsin K inhibitors F9775 A and F9775 B. The non-reducing polyketide synthase orsA produces orsellinic acid by condensing acetyl-CoA with 3 malonyl-CoA units. Further modifications by the decarboxylase orsB and the tyrosinase-like protein orsC lead to the production of F9775 A and F9775 B. The functions of orsD and orsE remain unclear since only orsB and orsC are required to convert orsellinic acid into F9775 A and F9775 B. The protein is Decarboxylase orsB of Emericella nidulans (strain FGSC A4 / ATCC 38163 / CBS 112.46 / NRRL 194 / M139) (Aspergillus nidulans).